The following is a 1306-amino-acid chain: Contactin-associated protein-like 5 (1306 aa).

The N-terminal stretch at 1-24 (MDSLPRLTSVLTLLFSGLWHLGLT) is a signal peptide. Topologically, residues 25 to 1237 (ATNYNCDDPL…PLTNAVRSDS (1213 aa)) are extracellular. One can recognise an F5/8 type C domain in the interval 30 to 174 (CDDPLASLLS…IGMRVEVYGC (145 aa)). Cysteine 30 and cysteine 174 are disulfide-bonded. 2 Laminin G-like domains span residues 180-360 (VADF…TFSC) and 367-544 (PITF…IDLC). N-linked (GlcNAc...) asparagine glycosylation is found at asparagine 282, asparagine 355, and asparagine 496. Cysteine 329 and cysteine 360 form a disulfide bridge. Cystine bridges form between cysteine 512-cysteine 544, cysteine 550-cysteine 561, and cysteine 555-cysteine 570. Residues 546 to 583 (IKDRCLPNYCEHGGSCSQSWTTFYCNCSDTSYTGATCH) form the EGF-like 1 domain. The N-linked (GlcNAc...) asparagine glycan is linked to asparagine 571. Residues cysteine 572 and cysteine 582 are joined by a disulfide bond. One can recognise a Fibrinogen C-terminal domain in the interval 584–790 (NSIYEQSCEV…LRCYGDRRFW (207 aa)). An N-linked (GlcNAc...) asparagine glycan is attached at asparagine 622. Residues 791-956 (NAVSFYTEAS…KVTSGVRPGC (166 aa)) enclose the Laminin G-like 3 domain. Disulfide bonds link cysteine 929/cysteine 956, cysteine 960/cysteine 973, cysteine 967/cysteine 982, cysteine 984/cysteine 994, and cysteine 1164/cysteine 1199. In terms of domain architecture, EGF-like 2 spans 957–995 (PGHCSSYGSICHNGGKCVEKHNGYLCDCTNSPYEGPFCK). The Laminin G-like 4 domain occupies 1013–1199 (QEPYPVTKNI…VHGTLTESSC (187 aa)). The chain crosses the membrane as a helical span at residues 1238–1258 (AVIGGVIAVVIFIIFCIIGIM). Over 1259–1306 (TRFLYQHKQSHRTSQMKEKEYPENLDSSFRNEIDLQNTVSECKREYFI) the chain is Cytoplasmic.

This sequence belongs to the neurexin family.

The protein resides in the membrane. Its function is as follows. May play a role in the correct development and proper functioning of the peripheral and central nervous system and be involved in cell adhesion and intercellular communication. This Homo sapiens (Human) protein is Contactin-associated protein-like 5 (CNTNAP5).